The sequence spans 99 residues: Putative membrane protein insertion efficiency factor (99 aa).

It belongs to the UPF0161 family.

The protein resides in the cell inner membrane. Its function is as follows. Could be involved in insertion of integral membrane proteins into the membrane. In Salinibacter ruber (strain DSM 13855 / M31), this protein is Putative membrane protein insertion efficiency factor.